Consider the following 159-residue polypeptide: Ribosomal RNA large subunit methyltransferase H (159 aa).

Residues L76, G108, and F127–F132 each bind S-adenosyl-L-methionine.

This sequence belongs to the RNA methyltransferase RlmH family. As to quaternary structure, homodimer.

It localises to the cytoplasm. It carries out the reaction pseudouridine(1915) in 23S rRNA + S-adenosyl-L-methionine = N(3)-methylpseudouridine(1915) in 23S rRNA + S-adenosyl-L-homocysteine + H(+). Specifically methylates the pseudouridine at position 1915 (m3Psi1915) in 23S rRNA. This Halalkalibacterium halodurans (strain ATCC BAA-125 / DSM 18197 / FERM 7344 / JCM 9153 / C-125) (Bacillus halodurans) protein is Ribosomal RNA large subunit methyltransferase H.